A 66-amino-acid polypeptide reads, in one-letter code: Large ribosomal subunit protein eL29 (66 aa).

Positions 1-14 (MAKSKNSTNKNQIS) are enriched in polar residues. Residues 1–66 (MAKSKNSTNK…KNLEKKVNKE (66 aa)) form a disordered region. The span at 15–31 (KSHRNGIKKPKDHRHIS) shows a compositional bias: basic residues. Over residues 47-66 (IKNDPSIKKSKNLEKKVNKE) the composition is skewed to basic and acidic residues.

The protein belongs to the eukaryotic ribosomal protein eL29 family.

Its subcellular location is the cytoplasm. The protein is Large ribosomal subunit protein eL29 (RPL29) of Tetrahymena thermophila.